We begin with the raw amino-acid sequence, 539 residues long: Chaperone Ric-8A (539 aa).

This sequence belongs to the synembryn family.

The protein localises to the cytoplasm. It is found in the cell cortex. Functionally, chaperone that specifically binds and folds nascent G alpha proteins prior to G protein heterotrimer formation, promoting their stability and activity: folds GNAI1, GNAO1, GNA13 and GNAQ. Does not fold G(s) G-alpha proteins GNAS nor GNAL. Also acts as a guanine nucleotide exchange factor (GEF) for G alpha proteins by stimulating exchange of bound GDP for free GTP. This is Chaperone Ric-8A (ric8a) from Xenopus tropicalis (Western clawed frog).